Here is a 364-residue protein sequence, read N- to C-terminus: Protein LATERAL BRANCHING OXIDOREDUCTASE 1 (364 aa).

A Fe2OG dioxygenase domain is found at 203–312 (RFEEMFGEAV…RLTIVTFYAP (110 aa)). Fe cation contacts are provided by histidine 235, aspartate 237, and histidine 293. Residue arginine 303 coordinates 2-oxoglutarate.

The protein belongs to the iron/ascorbate-dependent oxidoreductase family. In terms of assembly, monomer. Fe(2+) is required as a cofactor. The cofactor is L-ascorbate. In terms of tissue distribution, expressed in the vasculature throughout the plant and in the buds and root tips.

Its subcellular location is the cytoplasm. The catalysed reaction is (11R)-methyl carlactonoate + 2-oxoglutarate + O2 = (11R)-hydroxymethyl carlactonoate + succinate + CO2. Oxoglutarate-dependent dioxygenase involved in the biosynthesis of strigolactone natural products, bioactive compounds promoting plant fitness and soil microbe interactions, but preventing shoot branching. Catalyzes the hydroxylation of (11R)-methyl carlactonoate (MeCLA) to produce (11R)-hydroxymethyl carlactonoate (1'-HO-MeCLA) in final stages of strigolactone biosynthesis, downstream of MAX1 and CLAMT. In Arabidopsis thaliana (Mouse-ear cress), this protein is Protein LATERAL BRANCHING OXIDOREDUCTASE 1.